We begin with the raw amino-acid sequence, 193 residues long: Dual-action ribosomal maturation protein DarP (193 aa).

Residues 1–10 (MRGRDEETGE) show a composition bias toward basic and acidic residues. Disordered regions lie at residues 1–20 (MRGR…SQQR) and 171–193 (QEQG…EDDE). The segment covering 178–193 (GDSELEDGESASEDDE) has biased composition (acidic residues).

The protein belongs to the DarP family.

It localises to the cytoplasm. In terms of biological role, member of a network of 50S ribosomal subunit biogenesis factors which assembles along the 30S-50S interface, preventing incorrect 23S rRNA structures from forming. Promotes peptidyl transferase center (PTC) maturation. In Xanthomonas axonopodis pv. citri (strain 306), this protein is Dual-action ribosomal maturation protein DarP.